Consider the following 556-residue polypeptide: Solute carrier family 22 member 1 (556 aa).

Over 1 to 21 the chain is Cytoplasmic; sequence MPTVDDVLEQVGEFGWFQKQA. A helical membrane pass occupies residues 22 to 42; the sequence is FLLLCLISASLAPIYVGIVFL. At 43–150 the chain is on the extracellular side; sequence GFTPGHYCQN…LVCGDAWKVD (108 aa). N71 is a glycosylation site (N-linked (GlcNAc...) asparagine). The chain crosses the membrane as a helical span at residues 151–171; it reads LFQSCVNLGFFLGSLVVGYIA. Residues 172 to 177 are Cytoplasmic-facing; that stretch reads DRFGRK. A helical membrane pass occupies residues 178–198; sequence LCLLVTTLVTSVSGVLTAVAP. Residues 199-211 lie on the Extracellular side of the membrane; it reads DYTSMLLFRLLQG. Residues 212 to 231 traverse the membrane as a helical segment; the sequence is MVSKGSWVSGYTLITEFVGS. At 232-238 the chain is on the cytoplasmic side; sequence GYRRTTA. A helical membrane pass occupies residues 239–259; the sequence is ILYQMAFTVGLVGLAGVAYAI. At 260-263 the chain is on the extracellular side; sequence PDWR. Residues 264 to 284 form a helical membrane-spanning segment; sequence WLQLAVSLPTFLFLLYYWFVP. The Proline-rich sequence signature appears at 284–288; that stretch reads PESPR. Residues 285-348 lie on the Cytoplasmic side of the membrane; the sequence is ESPRWLLSQK…FRTPNLRKHT (64 aa). S334 is subject to Phosphoserine. A helical membrane pass occupies residues 349–369; that stretch reads VILMYLWFSCAVLYQGLIMHV. Over 370–377 the chain is Extracellular; sequence GATGANLY. A helical membrane pass occupies residues 378–398; sequence LDFFYSSLVEFPAAFIILVTI. At 399 to 403 the chain is on the cytoplasmic side; sequence DRIGR. A helical transmembrane segment spans residues 404–424; it reads IYPIAASNLVTGAACLLMIFI. Residues 425-429 lie on the Extracellular side of the membrane; that stretch reads PHELH. Residues 430–452 form a helical membrane-spanning segment; the sequence is WLNVTLACLGRMGATIVLQMVCL. Over 453–465 the chain is Cytoplasmic; that stretch reads VNAELYPTFIRNL. The chain crosses the membrane as a helical span at residues 466-486; it reads GMMVCSALCDLGGIFTPFMVF. Topologically, residues 487 to 493 are extracellular; the sequence is RLMEVWQ. Residues 494 to 514 traverse the membrane as a helical segment; the sequence is ALPLILFGVLGLTAGAMTLLL. Residues 515–556 lie on the Cytoplasmic side of the membrane; that stretch reads PETKGVALPETIEEAENLGRRKSKAKENTIYLQVQTGKSSST. T543 carries the post-translational modification Phosphothreonine.

This sequence belongs to the major facilitator (TC 2.A.1) superfamily. Organic cation transporter (TC 2.A.1.19) family. Post-translationally, phosphorylated. As to expression, expressed in kidney cortex in S1, S2 segments of renal proximal tubules as well as in kidney medulla. Expressed throughout the liver lobuli, in hepatocytes surrounding the central veins. Expressed in enterocytes of villi and crypts in small intestine. Expressed in brain, in some white matter regions like the corpus callosum and in the granular layer of the cerebellum. Expressed in Sertoli cells in testis. Expressed in colon. Expressed in tracheal and bronchial ciliated epithelium in the respiratory tract. Expressed in spleen, moderately in skin, and weakly in the gastrointestinal tract, lung, thymus, muscle, and prostate. Expressed in kidney cortex and medulla. Expressed in intestine, liver and colon.

The protein resides in the basolateral cell membrane. It localises to the apical cell membrane. The protein localises to the lateral cell membrane. Its subcellular location is the basal cell membrane. It is found in the cell membrane. The enzyme catalyses 1-methylnicotinamide(out) = 1-methylnicotinamide(in). It carries out the reaction dopamine(out) = dopamine(in). The catalysed reaction is serotonin(out) = serotonin(in). It catalyses the reaction (R)-adrenaline(out) = (R)-adrenaline(in). The enzyme catalyses (R)-noradrenaline(out) = (R)-noradrenaline(in). It carries out the reaction histamine(out) = histamine(in). The catalysed reaction is guanidine(out) = guanidine(in). It catalyses the reaction choline(out) = choline(in). The enzyme catalyses acetylcholine(in) = acetylcholine(out). It carries out the reaction thiamine(in) = thiamine(out). The catalysed reaction is agmatine(out) = agmatine(in). It catalyses the reaction putrescine(out) = putrescine(in). The enzyme catalyses spermidine(in) = spermidine(out). It carries out the reaction (R)-carnitine(in) = (R)-carnitine(out). The catalysed reaction is O-isobutanoyl-(R)-carnitine(in) = O-isobutanoyl-(R)-carnitine(out). It catalyses the reaction O-acetyl-(R)-carnitine(in) = O-acetyl-(R)-carnitine(out). The enzyme catalyses O-3-hydroxybutanoyl-(R)-carnitine(in) = O-3-hydroxybutanoyl-(R)-carnitine(out). It carries out the reaction O-propanoyl-(R)-carnitine(in) = O-propanoyl-(R)-carnitine(out). The catalysed reaction is O-butanoyl-(R)-carnitine(in) = O-butanoyl-(R)-carnitine(out). It catalyses the reaction O-2-methylbutanoyl-(R)-carnitine(in) = O-2-methylbutanoyl-(R)-carnitine(out). The enzyme catalyses O-3-methylbutanoyl-(R)-carnitine(in) = O-3-methylbutanoyl-(R)-carnitine(out). It carries out the reaction O-hexanoyl-(R)-carnitine(in) = O-hexanoyl-(R)-carnitine(out). The catalysed reaction is L-histidyl-L-proline diketopiperazine(in) = L-histidyl-L-proline diketopiperazine(out). It catalyses the reaction (R)-salsolinol(in) = (R)-salsolinol(out). The enzyme catalyses prostaglandin F2alpha(out) = prostaglandin F2alpha(in). It carries out the reaction prostaglandin E2(out) = prostaglandin E2(in). With respect to regulation, phosphorylation of the transporter leads to changes in its substrate affinity, resulting in a regulation of the transport activity. In contrast with human ortholog, ASP uptake is stimulated by protein kinase A (PKA) and C (PKC) and endogenous tyrosine kinase activation. ASP affinity is induced by PKC-dependent phosphorylation. Inhibited by cGMP, most likely through a cGMP-binding protein that interacts with OCT1. Its function is as follows. Electrogenic voltage-dependent transporter that mediates the transport of a variety of organic cations such as endogenous bioactive amines, cationic drugs and xenobiotics. Functions as a pH- and Na(+)-independent, bidirectional transporter. Cation cellular uptake or release is driven by the electrochemical potential (i.e. membrane potential and concentration gradient) and substrate selectivity. Hydrophobicity is a major requirement for recognition in polyvalent substrates and inhibitors. Primarily expressed in the basolateral membrane of hepatocytes and proximal tubules and involved in the uptake and disposition of cationic compounds from the blood by hepatic and renal clearance. Most likely functions as an uptake carrier in enterocytes contributing to the intestinal excretion and elimination of organic cations from the systemic circulation. Transports endogenous monoamines such as N-1-methylnicotinamide (NMN), guanidine, neurotransmitters dopamine, serotonin, noradrenaline, adrenaline and histamine, and quaternary ammonium compound such as choline. Also transports natural polyamines such as spermidine, agmatine and putrescine at low affinity, but relatively high turnover. Involved in the hepatic uptake of vitamin B1/thiamine, hence regulating hepatic lipid and energy metabolism. Contributes to the influx and efflux of fatty acid carriers carnitines and acylcarnitines across the basolateral membrane of hepatocytes, from the liver to the systemic circulation and inversely and may be involved in regulating the systemic availability of hepatic acylcarnitines. Mediates the bidirectional transport of acetylcholine (ACh) at the apical membrane of ciliated cell in airway epithelium, thereby playing a role in luminal release of ACh from bronchial epithelium. Transports dopaminergic neuromodulators cyclo(his-pro) and salsolinol with lower efficency. Also capable of transporting non-amine endogenous compounds such as prostaglandin E2 (PGE2) and prostaglandin F2-alpha (PGF2-alpha). May contribute to the transport of cationic compounds in testis across the blood-testis-barrier. Also mediates the uptake of xenobiotics tributylmethylammonium (TBuMA), quinidine, N-methyl-quinine (NMQ), N-methyl-quinidine (NMQD) N-(4,4-azo-n-pentyl)-quinuclidine (APQ), azidoprocainamide methoiodide (AMP), N-(4,4-azo-n-pentyl)-21-deoxyajmalinium (APDA) and 4-(4-(dimethylamino)styryl)-N-methylpyridinium (ASP). Functionally, functional isoform capable of transporting TEA. The protein is Solute carrier family 22 member 1 of Rattus norvegicus (Rat).